The primary structure comprises 336 residues: Phospho-N-acetylmuramoyl-pentapeptide-transferase (336 aa).

A run of 10 helical transmembrane segments spans residues 3 to 23, 53 to 73, 78 to 98, 118 to 138, 143 to 163, 174 to 194, 200 to 220, 226 to 246, 251 to 271, and 316 to 336; these read LTLIAAIISFMVSAFTMPYFI, GGTVFLLVATAVSLLVSLFSI, SLALISGILSIVVIYGIIGFL, LALQLVGGLMFYFLHVSPSGI, VFGYQLPLGIFYLFFVLFWVV, GIDGLASISVVISLVTYGVIA, FDVLLLIGAMIGALLGFFCFN, VFMGDVGSLALGAMLAAISIA, WTLLIIGIVYVLETSSVMLQV, and AFLWGVGSLASLLVLAILYVF.

The protein belongs to the glycosyltransferase 4 family. MraY subfamily. The cofactor is Mg(2+).

Its subcellular location is the cell membrane. It catalyses the reaction UDP-N-acetyl-alpha-D-muramoyl-L-alanyl-gamma-D-glutamyl-L-lysyl-D-alanyl-D-alanine + di-trans,octa-cis-undecaprenyl phosphate = Mur2Ac(oyl-L-Ala-gamma-D-Glu-L-Lys-D-Ala-D-Ala)-di-trans,octa-cis-undecaprenyl diphosphate + UMP. It participates in cell wall biogenesis; peptidoglycan biosynthesis. Catalyzes the initial step of the lipid cycle reactions in the biosynthesis of the cell wall peptidoglycan: transfers peptidoglycan precursor phospho-MurNAc-pentapeptide from UDP-MurNAc-pentapeptide onto the lipid carrier undecaprenyl phosphate, yielding undecaprenyl-pyrophosphoryl-MurNAc-pentapeptide, known as lipid I. The protein is Phospho-N-acetylmuramoyl-pentapeptide-transferase of Streptococcus pyogenes serotype M1.